We begin with the raw amino-acid sequence, 346 residues long: Structure-specific endonuclease subunit SLX1 (346 aa).

Positions 22–105 (DFYGVYLLRS…QHPYQTRHIK (84 aa)) constitute a GIY-YIG domain. The segment at 216–306 (CFICNETIDY…TPLQGKCLSC (91 aa)) adopts an SLX1-type zinc-finger fold.

This sequence belongs to the SLX1 family. As to quaternary structure, forms a heterodimer with SLX4. A divalent metal cation is required as a cofactor.

The protein localises to the nucleus. In terms of biological role, catalytic subunit of the SLX1-SLX4 structure-specific endonuclease that resolves DNA secondary structures generated during DNA repair and recombination. Has endonuclease activity towards branched DNA substrates, introducing single-strand cuts in duplex DNA close to junctions with ss-DNA. The chain is Structure-specific endonuclease subunit SLX1 from Debaryomyces hansenii (strain ATCC 36239 / CBS 767 / BCRC 21394 / JCM 1990 / NBRC 0083 / IGC 2968) (Yeast).